A 205-amino-acid chain; its full sequence is MEFLWAPLLGLCCSLAAADRHTVFWNSSEPKFWNEDYTVHVRLNDYLDIICPHYEDDSVAEAAMERYTLYLVEREQYQLCQPQSKDQVRWQCNQPNARHGPEKLSEKFQRFTPFTLGKEFKEGHSYYYISKPIHHQEDQCLKLKVTVSGKITHSPQAHANPQEKRLPADDPEVQVLHSIGHSAAPRLSPLAWAVLLLPFLLLQTS.

A signal peptide spans 1-18 (MEFLWAPLLGLCCSLAAA). One can recognise an Ephrin RBD domain in the interval 19-151 (DRHTVFWNSS…KLKVTVSGKI (133 aa)). The N-linked (GlcNAc...) asparagine glycan is linked to N26. 2 cysteine pairs are disulfide-bonded: C51/C92 and C80/C140. The GPI-anchor amidated serine moiety is linked to residue S182. Residues 183–205 (AAPRLSPLAWAVLLLPFLLLQTS) constitute a propeptide, removed in mature form.

Belongs to the ephrin family. In terms of assembly, monomer. Homodimer. Forms heterodimers with EPHA2. Binds to the receptor tyrosine kinases EPHA2, EPHA3, EPHA4, EPHA5, EPHA6 and EPHA7. Also binds with low affinity to EPHA1. In terms of processing, undergoes proteolysis by a metalloprotease to give rise to a soluble monomeric form. Post-translationally, N-Glycosylation is required for binding to EPHA2 receptor and inducing its internalization.

It localises to the cell membrane. The protein resides in the secreted. Cell surface GPI-bound ligand for Eph receptors, a family of receptor tyrosine kinases which are crucial for migration, repulsion and adhesion during neuronal, vascular and epithelial development. Binds promiscuously Eph receptors residing on adjacent cells, leading to contact-dependent bidirectional signaling into neighboring cells. Plays an important role in angiogenesis and tumor neovascularization. The recruitment of VAV2, VAV3 and PI3-kinase p85 subunit by phosphorylated EPHA2 is critical for EFNA1-induced RAC1 GTPase activation and vascular endothelial cell migration and assembly. Exerts anti-oncogenic effects in tumor cells through activation and down-regulation of EPHA2. Activates EPHA2 by inducing tyrosine phosphorylation which leads to its internalization and degradation. Acts as a negative regulator in the tumorigenesis of gliomas by down-regulating EPHA2 and FAK. Can evoke collapse of embryonic neuronal growth cone and regulates dendritic spine morphogenesis. This chain is Ephrin-A1 (EFNA1), found in Sus scrofa (Pig).